Reading from the N-terminus, the 271-residue chain is Formamidopyrimidine-DNA glycosylase (271 aa).

Residue proline 2 is the Schiff-base intermediate with DNA of the active site. Glutamate 3 (proton donor) is an active-site residue. The active-site Proton donor; for beta-elimination activity is the lysine 58. DNA is bound by residues histidine 91, arginine 110, and arginine 152. An FPG-type zinc finger spans residues 237–271 (WVYGRAGQSCRQCGELVSKTRQGQRSTFFCARCQH). Arginine 261 acts as the Proton donor; for delta-elimination activity in catalysis.

The protein belongs to the FPG family. In terms of assembly, monomer. It depends on Zn(2+) as a cofactor.

It catalyses the reaction Hydrolysis of DNA containing ring-opened 7-methylguanine residues, releasing 2,6-diamino-4-hydroxy-5-(N-methyl)formamidopyrimidine.. The enzyme catalyses 2'-deoxyribonucleotide-(2'-deoxyribose 5'-phosphate)-2'-deoxyribonucleotide-DNA = a 3'-end 2'-deoxyribonucleotide-(2,3-dehydro-2,3-deoxyribose 5'-phosphate)-DNA + a 5'-end 5'-phospho-2'-deoxyribonucleoside-DNA + H(+). In terms of biological role, involved in base excision repair of DNA damaged by oxidation or by mutagenic agents. Acts as a DNA glycosylase that recognizes and removes damaged bases. Has a preference for oxidized purines, such as 7,8-dihydro-8-oxoguanine (8-oxoG). Has AP (apurinic/apyrimidinic) lyase activity and introduces nicks in the DNA strand. Cleaves the DNA backbone by beta-delta elimination to generate a single-strand break at the site of the removed base with both 3'- and 5'-phosphates. This Nitrosomonas europaea (strain ATCC 19718 / CIP 103999 / KCTC 2705 / NBRC 14298) protein is Formamidopyrimidine-DNA glycosylase.